We begin with the raw amino-acid sequence, 729 residues long: Palmitoyltransferase akr1 (729 aa).

The span at 1-11 (MVHHDGADAHA) shows a compositional bias: basic and acidic residues. The disordered stretch occupies residues 1 to 28 (MVHHDGADAHAGHAAPAQPPMKSDTATP). Residues 1–297 (MVHHDGADAH…DRRSFMTKFT (297 aa)) are Cytoplasmic-facing. 5 ANK repeats span residues 76–105 (EGIT…EINK), 110–139 (SVAT…DPLI), 143–172 (QGYN…PVDV), 176–205 (YGHT…SVHA), and 209–238 (QGFT…DRFA). 2 consecutive transmembrane segments (helical) span residues 298-318 (FLWP…MPVF) and 319-339 (VGIP…QQVI). At 340–354 (AYAPPDMRQLQKTPW) the chain is on the cytoplasmic side. Residues 355–375 (MAGIFAGSLFLCIMNWLLHIF) traverse the membrane as a helical segment. The Lumenal segment spans residues 376-383 (GSTMFGQD). The helical transmembrane segment at 384-404 (SAVIPNLLFAFFISMTIWFYI) threads the bilayer. Residues 405-483 (RCMVDDPGFV…YNCIGVNNHR (79 aa)) lie on the Cytoplasmic side of the membrane. A DHHC domain is found at 440–490 (NFCVTCMIRTPLRSKHCRRCQRCVAKHDHHCPWVYNCIGVNNHRHFFFYLI). Cys-470 acts as the S-palmitoyl cysteine intermediate in catalysis. The helical transmembrane segment at 484–504 (HFFFYLINLTLSVVTYDWLTY) threads the bilayer. Residues 505–534 (RYLSTLSETASDECNILAPSLCRIVNADTY) lie on the Lumenal side of the membrane. A helical transmembrane segment spans residues 535-555 (SLLTAIWASLQLTWVSMLLFV). Residues 556-729 (QFVQVSSAMT…GYESVAGEEV (174 aa)) are Cytoplasmic-facing. Disordered regions lie at residues 587–620 (STGA…HGHN) and 709–729 (TSGG…GEEV). The span at 592 to 603 (LNPPSLPAPGPS) shows a compositional bias: pro residues. Residues 611 to 620 (HGGRHAHGHN) show a composition bias toward basic residues.

This sequence belongs to the DHHC palmitoyltransferase family. AKR/ZDHHC17 subfamily.

It is found in the early endosome membrane. The protein resides in the golgi apparatus membrane. The catalysed reaction is L-cysteinyl-[protein] + hexadecanoyl-CoA = S-hexadecanoyl-L-cysteinyl-[protein] + CoA. Functionally, palmitoyltransferase specific for casein kinase 1. The polypeptide is Palmitoyltransferase akr1 (ptr-1) (Neurospora crassa (strain ATCC 24698 / 74-OR23-1A / CBS 708.71 / DSM 1257 / FGSC 987)).